An 89-amino-acid polypeptide reads, in one-letter code: Small ribosomal subunit protein uS14 (89 aa).

Zn(2+) is bound by residues Cys-52, Cys-55, Cys-68, and Cys-71.

This sequence belongs to the universal ribosomal protein uS14 family. In terms of assembly, part of the 30S ribosomal subunit. Contacts proteins S3 and S10. The cofactor is Zn(2+).

Binds 16S rRNA, required for the assembly of 30S particles and may also be responsible for determining the conformation of the 16S rRNA at the A site. The sequence is that of Small ribosomal subunit protein uS14 (rpsN) from Salinibacter ruber (strain DSM 13855 / M31).